The chain runs to 327 residues: MAFTPFPPRQPSSSARLPLTLMTLDDWALATISGPDSEKYLQGQITADVSNLTDAQHLLAAHCDAKGKMWSNLRVFRRDGGFAWIERRSLRDVQLTELKKYAVFSKVTIAANDDLVLLGVAGFQARAALAPLFAALPDAATPVVSEDATSLLWFEHPGERFLLVTDVDTANRVTDALRGEAQLNNSQQWLALNIEAGLPVIDSANSGQFIPQATNLQALGGISFRKGCYTGQEMVARAKFRGANKRALWTLSGTASRVPEAGEDLELKMGDNWRRTGTVLAAVQLDDGQLLVQVVMNNDMEPDSIFRVRDDAGSLRIEPLPYSLEDA.

Positions 27 and 189 each coordinate folate.

The protein belongs to the tRNA-modifying YgfZ family.

Its subcellular location is the cytoplasm. Folate-binding protein involved in regulating the level of ATP-DnaA and in the modification of some tRNAs. It is probably a key factor in regulatory networks that act via tRNA modification, such as initiation of chromosomal replication. This Klebsiella pneumoniae (strain 342) protein is tRNA-modifying protein YgfZ.